The following is a 1074-amino-acid chain: Collagen, type I, alpha 1a (1074 aa).

Over residues 1-13 (KSPAMPVPGPMGP) the composition is skewed to pro residues. A disordered region spans residues 1 to 1010 (KSPAMPVPGP…PQEKAPDPYR (1010 aa)). Low complexity predominate over residues 14–36 (MGPRSGPQGFPGEAGAAGAMGPR). Basic and acidic residues predominate over residues 45–59 (NGEDGESGKPGRGGE). A compositionally biased stretch (low complexity) spans 129–147 (TGAAGAAGARGNDGAAGAA). Pro residues predominate over residues 149-162 (PPGPTGPAGPPGFP). Gly residues predominate over residues 163-181 (GGPGAKGDAGAQGGRGPEG). 3 stretches are compositionally biased toward low complexity: residues 182–225 (PAGA…AGAP), 234–272 (SGPQGAAGAPGPKGNTGEVGAPGAKGEAGAKGEAGAPGV), and 290–299 (EPGAAGARGA). The span at 301–313 (GERGGPGGRGFPG) shows a compositional bias: gly residues. 3 stretches are compositionally biased toward low complexity: residues 377–392 (VGARGQPGVMGFPGPK), 469–530 (VPGE…QGMP), and 563–578 (RGLTGPLGLPGPAGAT). Residues 588–597 (GPVGPGGARG) show a composition bias toward gly residues. Low complexity-rich tracts occupy residues 611-647 (AGFAGPPGADGQPGAKGEAGDNGAKGDAGPPGAAGPT) and 661-683 (PKGARGAAGPPGATGFPGAAGRV). The segment covering 685–697 (PPGPSGNPGPPGP) has biased composition (pro residues). Composition is skewed to low complexity over residues 715–742 (PAGRPGELGAAGPPGPAGEKGSPGSEGA) and 803–823 (PGLAGAPGEPGREGSPGSEGS). The span at 847–857 (APGPPGAPGPV) shows a compositional bias: pro residues. Residues 871 to 890 (PAGPAGSAGPAGPRGPAGAP) show a composition bias toward low complexity. A compositionally biased stretch (basic and acidic residues) spans 893–907 (RGDKGESGEAGERGH). The segment covering 920–956 (SGSSGEQGPAGAAGPAGPRGPAGSAGSPGKDGMSGLP) has biased composition (low complexity). Positions 974–986 (AGPPGPPGPPGAP) are enriched in pro residues. Residues 1014–1074 (LEVDSTLKSL…GLEVGPVCFL (61 aa)) form the Fibrillar collagen NC1 domain.

Belongs to the fibrillar collagen family.

It is found in the secreted. The protein resides in the extracellular space. It localises to the extracellular matrix. The chain is Collagen, type I, alpha 1a from Epinephelus marginatus (Dusky grouper).